The following is a 101-amino-acid chain: UPF0473 protein STER_1939 (101 aa).

Belongs to the UPF0473 family.

The polypeptide is UPF0473 protein STER_1939 (Streptococcus thermophilus (strain ATCC BAA-491 / LMD-9)).